The sequence spans 317 residues: 4-hydroxy-3-methylbut-2-enyl diphosphate reductase (317 aa).

A [4Fe-4S] cluster-binding site is contributed by cysteine 12. Residues histidine 41 and histidine 74 each coordinate (2E)-4-hydroxy-3-methylbut-2-enyl diphosphate. The dimethylallyl diphosphate site is built by histidine 41 and histidine 74. Residues histidine 41 and histidine 74 each contribute to the isopentenyl diphosphate site. Cysteine 97 is a [4Fe-4S] cluster binding site. (2E)-4-hydroxy-3-methylbut-2-enyl diphosphate is bound at residue histidine 125. A dimethylallyl diphosphate-binding site is contributed by histidine 125. Histidine 125 lines the isopentenyl diphosphate pocket. Catalysis depends on glutamate 127, which acts as the Proton donor. Threonine 168 contributes to the (2E)-4-hydroxy-3-methylbut-2-enyl diphosphate binding site. [4Fe-4S] cluster is bound at residue cysteine 198. (2E)-4-hydroxy-3-methylbut-2-enyl diphosphate contacts are provided by serine 226, serine 227, asparagine 228, and serine 270. Residues serine 226, serine 227, asparagine 228, and serine 270 each coordinate dimethylallyl diphosphate. Positions 226, 227, 228, and 270 each coordinate isopentenyl diphosphate.

It belongs to the IspH family. In terms of assembly, homodimer. [4Fe-4S] cluster serves as cofactor.

The catalysed reaction is isopentenyl diphosphate + 2 oxidized [2Fe-2S]-[ferredoxin] + H2O = (2E)-4-hydroxy-3-methylbut-2-enyl diphosphate + 2 reduced [2Fe-2S]-[ferredoxin] + 2 H(+). The enzyme catalyses dimethylallyl diphosphate + 2 oxidized [2Fe-2S]-[ferredoxin] + H2O = (2E)-4-hydroxy-3-methylbut-2-enyl diphosphate + 2 reduced [2Fe-2S]-[ferredoxin] + 2 H(+). It participates in isoprenoid biosynthesis; dimethylallyl diphosphate biosynthesis; dimethylallyl diphosphate from (2E)-4-hydroxy-3-methylbutenyl diphosphate: step 1/1. It functions in the pathway isoprenoid biosynthesis; isopentenyl diphosphate biosynthesis via DXP pathway; isopentenyl diphosphate from 1-deoxy-D-xylulose 5-phosphate: step 6/6. Its function is as follows. Catalyzes the conversion of 1-hydroxy-2-methyl-2-(E)-butenyl 4-diphosphate (HMBPP) into a mixture of isopentenyl diphosphate (IPP) and dimethylallyl diphosphate (DMAPP). Acts in the terminal step of the DOXP/MEP pathway for isoprenoid precursor biosynthesis. This is 4-hydroxy-3-methylbut-2-enyl diphosphate reductase from Proteus mirabilis (strain HI4320).